A 215-amino-acid polypeptide reads, in one-letter code: Large ribosomal subunit protein uL1 (215 aa).

This sequence belongs to the universal ribosomal protein uL1 family. As to quaternary structure, part of the 50S ribosomal subunit.

Functionally, binds directly to 23S rRNA. Probably involved in E site tRNA release. Protein L1 is also a translational repressor protein, it controls the translation of its operon by binding to its mRNA. This chain is Large ribosomal subunit protein uL1, found in Archaeoglobus fulgidus (strain ATCC 49558 / DSM 4304 / JCM 9628 / NBRC 100126 / VC-16).